The primary structure comprises 436 residues: GTPase Der (436 aa).

EngA-type G domains lie at proline 4–glutamate 167 and isoleucine 175–asparagine 351. Residues glycine 10–serine 17, aspartate 57–isoleucine 61, asparagine 119–aspartate 122, glycine 181–serine 188, aspartate 229–methionine 233, and asparagine 294–aspartate 297 each bind GTP. One can recognise a KH-like domain in the interval threonine 352–lysine 436.

It belongs to the TRAFAC class TrmE-Era-EngA-EngB-Septin-like GTPase superfamily. EngA (Der) GTPase family. Associates with the 50S ribosomal subunit.

Functionally, GTPase that plays an essential role in the late steps of ribosome biogenesis. In Streptococcus gordonii (strain Challis / ATCC 35105 / BCRC 15272 / CH1 / DL1 / V288), this protein is GTPase Der.